A 1427-amino-acid chain; its full sequence is DNA-directed RNA polymerase subunit beta' (1427 aa).

Cys70, Cys72, Cys85, and Cys88 together coordinate Zn(2+). Positions 461, 463, and 465 each coordinate Mg(2+). Positions 838, 912, 919, and 922 each coordinate Zn(2+).

Belongs to the RNA polymerase beta' chain family. In terms of assembly, the RNAP catalytic core consists of 2 alpha, 1 beta, 1 beta' and 1 omega subunit. When a sigma factor is associated with the core the holoenzyme is formed, which can initiate transcription. Mg(2+) is required as a cofactor. The cofactor is Zn(2+).

The enzyme catalyses RNA(n) + a ribonucleoside 5'-triphosphate = RNA(n+1) + diphosphate. Functionally, DNA-dependent RNA polymerase catalyzes the transcription of DNA into RNA using the four ribonucleoside triphosphates as substrates. The polypeptide is DNA-directed RNA polymerase subunit beta' (Sorangium cellulosum (strain So ce56) (Polyangium cellulosum (strain So ce56))).